A 329-amino-acid polypeptide reads, in one-letter code: Probable nicotianamine synthase 4 (329 aa).

It belongs to the nicotianamine synthase (NAS)-like family.

It carries out the reaction 3 S-adenosyl-L-methionine = nicotianamine + 3 S-methyl-5'-thioadenosine + 3 H(+). Synthesizes nicotianamine, a polyamine that is the first intermediate in the synthesis of the phytosiderophores of the mugineic acid type found in gramineae which serves as a sensor for the physiological iron status within the plant, and/or might be involved in the transport of iron. The polypeptide is Probable nicotianamine synthase 4 (NAS4) (Hordeum vulgare (Barley)).